The sequence spans 208 residues: Uracil phosphoribosyltransferase (208 aa).

Residues Arg77, Arg102, and 129-137 (DPMLATGNS) each bind 5-phospho-alpha-D-ribose 1-diphosphate. Uracil-binding positions include Ile193 and 198-200 (GDA). Residue Asp199 coordinates 5-phospho-alpha-D-ribose 1-diphosphate.

This sequence belongs to the UPRTase family. Requires Mg(2+) as cofactor.

It catalyses the reaction UMP + diphosphate = 5-phospho-alpha-D-ribose 1-diphosphate + uracil. Its pathway is pyrimidine metabolism; UMP biosynthesis via salvage pathway; UMP from uracil: step 1/1. Allosterically activated by GTP. Functionally, catalyzes the conversion of uracil and 5-phospho-alpha-D-ribose 1-diphosphate (PRPP) to UMP and diphosphate. The chain is Uracil phosphoribosyltransferase from Mycoplasmopsis pulmonis (strain UAB CTIP) (Mycoplasma pulmonis).